The chain runs to 351 residues: Biotin synthase (351 aa).

In terms of domain architecture, Radical SAM core spans 58–285 (NTVQLSTLLS…RAMVRLSAGR (228 aa)). Positions 73, 77, and 80 each coordinate [4Fe-4S] cluster. [2Fe-2S] cluster-binding residues include Cys-117, Cys-148, Cys-208, and Arg-280.

It belongs to the radical SAM superfamily. Biotin synthase family. Homodimer. [4Fe-4S] cluster serves as cofactor. [2Fe-2S] cluster is required as a cofactor.

The catalysed reaction is (4R,5S)-dethiobiotin + (sulfur carrier)-SH + 2 reduced [2Fe-2S]-[ferredoxin] + 2 S-adenosyl-L-methionine = (sulfur carrier)-H + biotin + 2 5'-deoxyadenosine + 2 L-methionine + 2 oxidized [2Fe-2S]-[ferredoxin]. The protein operates within cofactor biosynthesis; biotin biosynthesis; biotin from 7,8-diaminononanoate: step 2/2. In terms of biological role, catalyzes the conversion of dethiobiotin (DTB) to biotin by the insertion of a sulfur atom into dethiobiotin via a radical-based mechanism. The sequence is that of Biotin synthase from Paraburkholderia phymatum (strain DSM 17167 / CIP 108236 / LMG 21445 / STM815) (Burkholderia phymatum).